We begin with the raw amino-acid sequence, 148 residues long: Protein TIFY 5B (148 aa).

The Tify domain maps to 54 to 89; it reads PKQESQILTIFYNGHMCVSSDLTHLEANAILSLASR.

The protein belongs to the TIFY/JAZ family. Post-translationally, ubiquitinated. Targeted for degradation by the SCF(COI1) E3 ubiquitin ligase-proteasome pathway during jasmonate signaling.

It localises to the nucleus. Functionally, repressor of jasmonate responses. In Arabidopsis thaliana (Mouse-ear cress), this protein is Protein TIFY 5B (TIFY 5B).